Reading from the N-terminus, the 1013-residue chain is MASENTAGSGSRVAGMVYSLWLLVLGPSVLALEEVLLDTTGETSEIGWLTYPPGGWDEVSVLDDQRRLTRTFEACHVAGLPPGSGQDNWLQTHFVERRGAQRAHIRLHFSVRACSSLGVSGGTCRETFTLYYRQADEPDSPDSISAWHLKRWTKVDTIAADESFPASSSSSSWAVGPHRTDQRVGLQLNVKERSFGPLTQRGFYVAFQDTGACLALVAVKLFSYTCPSVLRAFASFPETQASGAGGASLVAAVGTCVAHAEPEEDGVGGQAGGSPPRLHCNGEGRWMVAVGGCRCQPGHQPARGDKLCQACPEGSYKALPGNVPCSPCPARSHSPDPAAPVCPCLQGFYRASSDPPEAPCTGPPSAPRELWFEVQGSALMLHWRLPQELGGRGDLLFNVVCKECGGHKEPSSGGMCRRCRDEVHFDPRQRGLTESRVLVGGLRAHVPYILEVQAVNGVSELSPDPPQAAAINVSTSHEVPSAVPVMHQVSRAANSITVSWPQPEQTNGNILDYQLRYYDQAEDESHSFTMTSETNTATVTRLSPGHIYGFQVRARTAAGHGPYGGKVYFQTLPQGELSSQLPEKLSLVIGSILGALAFLLLAAITVLAVIFQRKRRGTGYTEQLQQYSSPGLGVKYYIDPSTYDDPCQAIRELAREVDPTYIKIEEVIGAGSFGEVRRGRLQPRGRREQAVAIQALWAGGAESLKMTFLGRAALLGQFQHPNILRLEGVVTRSRPVMVLTELMELGPLDSFLRQREGQFSSLQLVAMQRGVAAAMQYLSSFAFVHRALSARSVLVNSHLVCKVARLGHSPQGSSSLLRWAAPEVITHGKYTTSSDVWSFGILMWEVMSYGERPYWDMSDQEVLNAIEQEFRLPPPPGCPTGLHLLMLDTWQKDRARRPHFDQLVAAFDKMIRKPDTLQAEGSSGDRPSQALLNPVALDFPCLDSPQAWLSAIGLECYQDNFSKFGLSTFSDVAQLSLEDLPGLGITLAGHQKKLLHNIQLLQQHLRQPGSVEV.

An N-terminal signal peptide occupies residues 1–31; sequence MASENTAGSGSRVAGMVYSLWLLVLGPSVLA. The Extracellular segment spans residues 32-590; the sequence is LEEVLLDTTG…LPEKLSLVIG (559 aa). An Eph LBD domain is found at 33–231; the sequence is EEVLLDTTGE…FSYTCPSVLR (199 aa). 2 consecutive Fibronectin type-III domains span residues 363-478 and 479-574; these read PPSA…TSHE and VPSA…TLPQ. N-linked (GlcNAc...) asparagine glycosylation occurs at N472. Residues 591 to 611 traverse the membrane as a helical segment; that stretch reads SILGALAFLLLAAITVLAVIF. The Cytoplasmic portion of the chain corresponds to 612-1013; that stretch reads QRKRRGTGYT…HLRQPGSVEV (402 aa). The region spanning 662 to 911 is the Protein kinase domain; the sequence is IKIEEVIGAG…QLVAAFDKMI (250 aa). An ATP-binding site is contributed by 668–676; it reads IGAGSFGEV. The SAM domain maps to 940-1004; it reads PCLDSPQAWL…LHNIQLLQQH (65 aa). The PDZ-binding motif lies at 1011 to 1013; it reads VEV.

The protein belongs to the protein kinase superfamily. Tyr protein kinase family. Ephrin receptor subfamily. In terms of assembly, interacts with CBL and EPHB1. Interacts with FYN; this interaction takes place in a ligand-independent manner. Post-translationally, ligand-binding increases phosphorylation on tyrosine residues. Phosphorylation on tyrosine residues is mediated by transphosphorylation by the catalytically active EPHB1 in a ligand-independent manner. Tyrosine phosphorylation of the receptor may act as a switch on the functional transition from cell adhesion/attraction to de-adhesion/repulsion.

Its subcellular location is the membrane. Its function is as follows. Kinase-defective receptor for members of the ephrin-B family. Binds to ephrin-B1 and ephrin-B2. Modulates cell adhesion and migration by exerting both positive and negative effects upon stimulation with ephrin-B2. Inhibits JNK activation, T-cell receptor-induced IL-2 secretion and CD25 expression upon stimulation with ephrin-B2. This is Ephrin type-B receptor 6 (Ephb6) from Rattus norvegicus (Rat).